A 180-amino-acid chain; its full sequence is Major urinary protein 6 (180 aa).

Residues 1–18 form the signal peptide; it reads MKMLLLLCLGLTLVCVHA. A disulfide bridge connects residues Cys82 and Cys175.

Belongs to the calycin superfamily. Lipocalin family. In terms of tissue distribution, abundant in the urine of adult male mice but absent from that of females.

Its subcellular location is the secreted. Binds pheromones that are released from drying urine of males. These pheromones affect the sexual behavior of females. The polypeptide is Major urinary protein 6 (Mup6) (Mus musculus (Mouse)).